A 264-amino-acid polypeptide reads, in one-letter code: Thymidylate synthase (264 aa).

R21 contributes to the dUMP binding site. H51 lines the (6R)-5,10-methylene-5,6,7,8-tetrahydrofolate pocket. Position 126-127 (126-127) interacts with dUMP; sequence RR. C146 acts as the Nucleophile in catalysis. DUMP contacts are provided by residues 166–169, N177, and 207–209; these read RSCD and HLY. A (6R)-5,10-methylene-5,6,7,8-tetrahydrofolate-binding site is contributed by D169. A (6R)-5,10-methylene-5,6,7,8-tetrahydrofolate-binding site is contributed by A263.

This sequence belongs to the thymidylate synthase family. Bacterial-type ThyA subfamily. Homodimer.

Its subcellular location is the cytoplasm. It catalyses the reaction dUMP + (6R)-5,10-methylene-5,6,7,8-tetrahydrofolate = 7,8-dihydrofolate + dTMP. The protein operates within pyrimidine metabolism; dTTP biosynthesis. Catalyzes the reductive methylation of 2'-deoxyuridine-5'-monophosphate (dUMP) to 2'-deoxythymidine-5'-monophosphate (dTMP) while utilizing 5,10-methylenetetrahydrofolate (mTHF) as the methyl donor and reductant in the reaction, yielding dihydrofolate (DHF) as a by-product. This enzymatic reaction provides an intracellular de novo source of dTMP, an essential precursor for DNA biosynthesis. This Shewanella sp. (strain ANA-3) protein is Thymidylate synthase.